Reading from the N-terminus, the 426-residue chain is Serine--tRNA ligase (426 aa).

A compositionally biased stretch (polar residues) spans 41 to 60 (QTRTEQLQAERNARSKSIGQ). Residues 41–64 (QTRTEQLQAERNARSKSIGQAKQR) are disordered. 233-235 (TAE) is a binding site for L-serine. 264 to 266 (RSE) is an ATP binding site. L-serine is bound at residue E287. 351-354 (EISS) provides a ligand contact to ATP. S387 provides a ligand contact to L-serine.

It belongs to the class-II aminoacyl-tRNA synthetase family. Type-1 seryl-tRNA synthetase subfamily. Homodimer. The tRNA molecule binds across the dimer.

The protein localises to the cytoplasm. It catalyses the reaction tRNA(Ser) + L-serine + ATP = L-seryl-tRNA(Ser) + AMP + diphosphate + H(+). The catalysed reaction is tRNA(Sec) + L-serine + ATP = L-seryl-tRNA(Sec) + AMP + diphosphate + H(+). The protein operates within aminoacyl-tRNA biosynthesis; selenocysteinyl-tRNA(Sec) biosynthesis; L-seryl-tRNA(Sec) from L-serine and tRNA(Sec): step 1/1. Functionally, catalyzes the attachment of serine to tRNA(Ser). Is also able to aminoacylate tRNA(Sec) with serine, to form the misacylated tRNA L-seryl-tRNA(Sec), which will be further converted into selenocysteinyl-tRNA(Sec). The polypeptide is Serine--tRNA ligase (Pseudomonas fluorescens (strain ATCC BAA-477 / NRRL B-23932 / Pf-5)).